Consider the following 139-residue polypeptide: MKLIAQISRSLSLALFALVLMVGSFVAVMSPAAAETFTVKMGADSGLLQFEPANVTVHPGDTVKWVNNKLPPHNILFDDKQVPGASKELADKLSHSQLMFSPGESYEITFSSDFPAGTYTYYCAPHRGAGMVGKITVEG.

The N-terminal stretch at 1-34 (MKLIAQISRSLSLALFALVLMVGSFVAVMSPAAA) is a signal peptide. The region spanning 35-139 (ETFTVKMGAD…GMVGKITVEG (105 aa)) is the Plastocyanin-like domain. His-73, Cys-123, His-126, and Met-131 together coordinate Cu cation.

Belongs to the plastocyanin family. Requires Cu(2+) as cofactor.

It is found in the cellular thylakoid membrane. In terms of biological role, participates in electron transfer between P700 and the cytochrome b6-f complex in photosystem I. This Leptolyngbya laminosa (Phormidium laminosum) protein is Plastocyanin (petE).